The primary structure comprises 251 residues: Fibroblast growth factor 23 (251 aa).

Positions 1-24 are cleaved as a signal peptide; the sequence is MLGTCLRLLVGVLCTVCSLGTARA. Cys-95 and Cys-113 are disulfide-bonded. 2 O-linked (GalNAc) threonine glycosylation sites follow: Thr-171 and Thr-178. Residues 175–251 form a disordered region; that stretch reads RRHTRSAEDP…DRCRPFPRFV (77 aa). Over residues 179–189 the composition is skewed to basic and acidic residues; that stretch reads RSAEDPPERDP. A Phosphoserine; by FAM20C modification is found at Ser-180.

It belongs to the heparin-binding growth factors family. In terms of assembly, interacts with FGFR1. Interacts with FGFR2, FGFR3 and FGFR4. Affinity between fibroblast growth factors (FGFs) and their receptors is increased by KL and heparan sulfate glycosaminoglycans that function as coreceptors. Post-translationally, following secretion this protein is inactivated by cleavage into a N-terminal fragment and a C-terminal fragment. The processing is effected by proprotein convertases. O-glycosylated at Thr-171 and Thr-178 by GALNT3 and glycosylation of Thr-178 requires previous glycosylation at Thr171. Glycosylation is necessary for secretion; it blocks processing by proprotein convertases when the O-glycan is alpha 2,6-sialylated. Competition between proprotein convertase cleavage and block of cleavage by O-glycosylation determines the level of secreted active FGF23. In terms of processing, phosphorylation at Ser-180 mediated by FAM20C slows down glycosylation at Thr-178 notably. As to expression, mainly expressed in the brain and thymus at low levels. In brain; preferentially expressed in the ventrolateral thalamic nucleus.

The protein resides in the secreted. Functionally, regulator of phosphate homeostasis. Inhibits renal tubular phosphate transport by reducing SLC34A1 levels. Acts directly on the parathyroid to decrease PTH secretion. Regulator of vitamin-D metabolism. Negatively regulates osteoblasts differentiation and matrix mineralization. Up-regulates EGR1 expression in the presence of KL. The chain is Fibroblast growth factor 23 (Fgf23) from Mus musculus (Mouse).